Reading from the N-terminus, the 452-residue chain is Probable cytosolic iron-sulfur protein assembly protein 1 (452 aa).

The span at 1-12 shows a compositional bias: pro residues; that stretch reads MPPPTTPTPNPS. The disordered stretch occupies residues 1 to 24; it reads MPPPTTPTPNPSIPQKATLTPLPP. 6 WD repeats span residues 70–121, 161–200, 213–267, 273–319, 340–379, and 411–452; these read GHAR…DAAA, GHEN…QGGD, EHDG…EWVC, GHGG…FGGV, VHTR…EDVA, and YEVN…VRIS.

This sequence belongs to the WD repeat CIA1 family.

Essential component of the cytosolic iron-sulfur (Fe/S) protein assembly machinery. Required for the maturation of extramitochondrial Fe/S proteins. The sequence is that of Probable cytosolic iron-sulfur protein assembly protein 1 from Chaetomium globosum (strain ATCC 6205 / CBS 148.51 / DSM 1962 / NBRC 6347 / NRRL 1970) (Soil fungus).